Reading from the N-terminus, the 322-residue chain is Eukaryotic translation initiation factor 3 subunit I (322 aa).

WD repeat units lie at residues 4 to 43 (GHER…RLGT), 46 to 85 (GHQG…IIAS), 141 to 180 (MTES…KVVD), 184 to 223 (DHTA…CLKT), and 281 to 322 (GHFG…NIFE).

It belongs to the eIF-3 subunit I family. Component of the eukaryotic translation initiation factor 3 (eIF-3) complex. The eIF-3 complex interacts with pix.

It localises to the cytoplasm. Functionally, component of the eukaryotic translation initiation factor 3 (eIF-3) complex, which is involved in protein synthesis of a specialized repertoire of mRNAs and, together with other initiation factors, stimulates binding of mRNA and methionyl-tRNAi to the 40S ribosome. The eIF-3 complex specifically targets and initiates translation of a subset of mRNAs involved in cell proliferation. The protein is Eukaryotic translation initiation factor 3 subunit I of Drosophila ananassae (Fruit fly).